Reading from the N-terminus, the 348-residue chain is MAVALGPSGWWQRWRRRLSAREVSRMLLLLLLLGSGQGPRQVGAGQTFEYLKREHSLSKPYQGVGTSSSSLWNLMGNAMVMTQYIRLTPDMQSKQGALWNRVPCFLRDWELQVHFRIHGQGKKNLHGDGLAIWYTKDRMQPGPVFGNMDKFVGLGVFVDTYPNEEKQQERVFPYISAMVNNGSLSYDHERDGRPTELGGCTAIVRNLHYDTFLVIRYVKRHLTIMMDIDGKHEWRDCIEVPGVRLPRGYYFGTSSITGDLSDNHDVISLKLFELTVERTPEEEKLHRDVFLPSVDNMKLPEMTAPLPPLSGLALFLIVFFSLVFSVFAIVIGIILYNKWQDQSRKRFY.

An N-terminal signal peptide occupies residues 1 to 38; it reads MAVALGPSGWWQRWRRRLSAREVSRMLLLLLLLGSGQG. Topologically, residues 39–313 are lumenal; that stretch reads PRQVGAGQTF…APLPPLSGLA (275 aa). The region spanning 49–274 is the L-type lectin-like domain; sequence EYLKREHSLS…DVISLKLFEL (226 aa). Residues Ser-93 and Asp-128 each contribute to the a carbohydrate site. Residues Asp-159, Tyr-161, and Asn-163 each contribute to the Ca(2+) site. A carbohydrate contacts are provided by Tyr-161 and Asn-163. Residue Asn-181 is glycosylated (N-linked (GlcNAc...) asparagine). Residue His-188 participates in a carbohydrate binding. Asp-191 is a binding site for Ca(2+). An intrachain disulfide couples Cys-200 to Cys-237. 258-260 contacts a carbohydrate; that stretch reads GDL. A helical transmembrane segment spans residues 314 to 334; sequence LFLIVFFSLVFSVFAIVIGII. Over 335-348 the chain is Cytoplasmic; the sequence is LYNKWQDQSRKRFY. An Endoplasmic reticulum retention signal motif is present at residues 344–346; it reads RKR.

It localises to the endoplasmic reticulum membrane. Its subcellular location is the golgi apparatus membrane. Its function is as follows. May be involved in the regulation of export from the endoplasmic reticulum of a subset of glycoproteins. May function as a regulator of ERGIC-53. This is VIP36-like protein (LMAN2L) from Bos taurus (Bovine).